We begin with the raw amino-acid sequence, 399 residues long: Serine/threonine-protein kinase PknL (399 aa).

The Cytoplasmic portion of the chain corresponds to 1 to 368; that stretch reads MVEAGTRDPL…FIWARQHARR (368 aa). The 260-residue stretch at 19-278 folds into the Protein kinase domain; it reads YLVQAKIASG…IAMGADLEAI (260 aa). ATP contacts are provided by residues 25-33 and Lys-48; that span reads IASGGTSTV. The residue at position 32 (Thr-32) is a Phosphothreonine; by autocatalysis. At Thr-62 the chain carries Phosphothreonine; by autocatalysis. The active-site Proton acceptor is the Asp-142. Residues Thr-173, Thr-175, and Thr-323 each carry the phosphothreonine; by autocatalysis modification. Positions 312–346 are disordered; the sequence is GQLGAKPVHHPTRQLTRQPGDCSEPASGSEPEHEP. Residues 369-389 traverse the membrane as a helical segment; it reads MVLVWVSVVLAITGLVASAAW. The Extracellular portion of the chain corresponds to 390-399; the sequence is TIGSNLSGLL.

The protein belongs to the protein kinase superfamily. Ser/Thr protein kinase family. Autophosphorylated. Thr-173 is required for autophosphorylation and transphosphorylation activities. Thr-175 is not necessary for autophosphorylation activity, but is required for full kinase activity.

Its subcellular location is the cell membrane. The catalysed reaction is L-seryl-[protein] + ATP = O-phospho-L-seryl-[protein] + ADP + H(+). The enzyme catalyses L-threonyl-[protein] + ATP = O-phospho-L-threonyl-[protein] + ADP + H(+). Phosphorylates the DNA-binding protein MT2231. May be involved in the regulation of cell division and cell envelope biosynthesis. The protein is Serine/threonine-protein kinase PknL (pknL) of Mycobacterium tuberculosis (strain CDC 1551 / Oshkosh).